A 231-amino-acid chain; its full sequence is Ribosyldihydronicotinamide dehydrogenase [quinone] (231 aa).

FAD-binding positions include H12, 18-21 (FNGS), and 104-107 (LYWF). A substrate-binding site is contributed by 127–129 (FDI). FAD-binding positions include 148–151 (TTGG) and Y156. Residues H174 and H178 each contribute to the Zn(2+) site. D194 contributes to the FAD binding site. A Phosphoserine modification is found at S197. Residue R201 participates in FAD binding. C223 is a binding site for Zn(2+).

Belongs to the NAD(P)H dehydrogenase (quinone) family. Homodimer. The cofactor is Zn(2+). It depends on FAD as a cofactor.

It localises to the cytoplasm. It carries out the reaction 1-(beta-D-ribofuranosyl)-1,4-dihydronicotinamide + a quinone + H(+) = beta-nicotinamide D-riboside + a quinol. The enzyme apparently serves as a quinone reductase in connection with conjugation reactions of hydroquinones involved in detoxification pathways as well as in biosynthetic processes such as the vitamin K-dependent gamma-carboxylation of glutamate residues in prothrombin synthesis. In Mus musculus (Mouse), this protein is Ribosyldihydronicotinamide dehydrogenase [quinone] (Nqo2).